The sequence spans 525 residues: Glucans biosynthesis protein G (525 aa).

The N-terminal stretch at 1 to 35 (MIFRSVSNTDFRARVRTLLLAGSTALAFVAAPVWA) is a signal peptide.

This sequence belongs to the OpgD/OpgG family.

The protein localises to the periplasm. It participates in glycan metabolism; osmoregulated periplasmic glucan (OPG) biosynthesis. Functionally, involved in the biosynthesis of osmoregulated periplasmic glucans (OPGs). This is Glucans biosynthesis protein G from Pseudomonas paraeruginosa (strain DSM 24068 / PA7) (Pseudomonas aeruginosa (strain PA7)).